We begin with the raw amino-acid sequence, 325 residues long: Elongation factor P--(R)-beta-lysine ligase (325 aa).

Substrate is bound at residue 76 to 78; it reads SPE. Residues 100–102 and N109 each bind ATP; that span reads RNE. Y118 contributes to the substrate binding site. 244 to 245 is a binding site for ATP; it reads EL. E251 contributes to the substrate binding site. G300 contacts ATP.

It belongs to the class-II aminoacyl-tRNA synthetase family. EpmA subfamily. As to quaternary structure, homodimer.

The catalysed reaction is D-beta-lysine + L-lysyl-[protein] + ATP = N(6)-((3R)-3,6-diaminohexanoyl)-L-lysyl-[protein] + AMP + diphosphate + H(+). In terms of biological role, with EpmB is involved in the beta-lysylation step of the post-translational modification of translation elongation factor P (EF-P) on 'Lys-34'. Catalyzes the ATP-dependent activation of (R)-beta-lysine produced by EpmB, forming a lysyl-adenylate, from which the beta-lysyl moiety is then transferred to the epsilon-amino group of EF-P 'Lys-34'. In Salmonella dublin (strain CT_02021853), this protein is Elongation factor P--(R)-beta-lysine ligase.